A 415-amino-acid chain; its full sequence is Gamma-glutamyl phosphate reductase (415 aa).

This sequence belongs to the gamma-glutamyl phosphate reductase family.

The protein localises to the cytoplasm. The catalysed reaction is L-glutamate 5-semialdehyde + phosphate + NADP(+) = L-glutamyl 5-phosphate + NADPH + H(+). The protein operates within amino-acid biosynthesis; L-proline biosynthesis; L-glutamate 5-semialdehyde from L-glutamate: step 2/2. Functionally, catalyzes the NADPH-dependent reduction of L-glutamate 5-phosphate into L-glutamate 5-semialdehyde and phosphate. The product spontaneously undergoes cyclization to form 1-pyrroline-5-carboxylate. In Bacillus subtilis (strain 168), this protein is Gamma-glutamyl phosphate reductase.